The following is a 500-amino-acid chain: NAD(P)H-quinone oxidoreductase chain 4, chloroplastic (500 aa).

The next 14 helical transmembrane spans lie at 4–24, 37–57, 87–107, 113–130, 134–154, 167–187, 207–227, 242–262, 272–292, 305–325, 330–350, 386–406, 411–431, and 462–482; these read FPWLTIIVVLPISAGSLIFFL, ICICVLELLLTTYAFCYHFQL, IGPILLTGFITTLATLAAWPV, LFHFLMLAMYSGQIGSFS, LLLFFLMWELELIPVYLLLSM, FILYTAGGSIFLLIGVLGIGL, IALEIIFYIGFLIAFAVKSPI, HYSTCMLLAGILLKMGAYGLV, AHSLFSPWLVVVGTMQIIYAA, IAYSSVSHMGFIIIGIGSITD, GAILQIVSHGFIGAALFFLAG, LALPGMSGFVAELIVFFGIIT, FLMAKILITFVMAIGMILTPI, and LFVSISILLPVIGIGIYPDFL.

Belongs to the complex I subunit 4 family.

It is found in the plastid. The protein resides in the chloroplast thylakoid membrane. The enzyme catalyses a plastoquinone + NADH + (n+1) H(+)(in) = a plastoquinol + NAD(+) + n H(+)(out). The catalysed reaction is a plastoquinone + NADPH + (n+1) H(+)(in) = a plastoquinol + NADP(+) + n H(+)(out). This Carica papaya (Papaya) protein is NAD(P)H-quinone oxidoreductase chain 4, chloroplastic.